Reading from the N-terminus, the 74-residue chain is UPF0435 protein GTNG_0390 (74 aa).

This sequence belongs to the UPF0435 family.

The sequence is that of UPF0435 protein GTNG_0390 from Geobacillus thermodenitrificans (strain NG80-2).